The primary structure comprises 26 residues: Oxyopinin-3b (26 aa).

In terms of tissue distribution, expressed by the venom gland.

It localises to the secreted. In terms of biological role, may have cytolytic and antimicrobial activity. This chain is Oxyopinin-3b, found in Oxyopes takobius (Lynx spider).